The primary structure comprises 1482 residues: Calcium-dependent protein kinase 6 (1482 aa).

Disordered regions lie at residues 250–320 and 739–760; these read TNNY…IRPN and SENF…DDSN. A compositionally biased stretch (polar residues) spans 254 to 264; the sequence is AHDNNQDSNSY. A compositionally biased stretch (acidic residues) spans 277–301; the sequence is EEDNDTGDTYADNEEDEDNRDDNDD. Polar residues predominate over residues 302 to 318; it reads YSQYNQCEVESDTNQIR. Residues 739–748 are compositionally biased toward low complexity; the sequence is SENFSNNFND. Over residues 749–760 the composition is skewed to basic and acidic residues; it reads NKQKSLKNDDSN. EF-hand domains are found at residues 931–966 and 972–1007; these read IFER…LCYN and VDKK…LLKQ. Positions 985, 987, 989, 991, and 996 each coordinate Ca(2+). One can recognise a Protein kinase domain in the interval 1043–1295; that stretch reads LSFKKILGCG…AAVLLHHPWF (253 aa). ATP contacts are provided by residues 1049-1057 and lysine 1072; that span reads LGCGAFGEV. Aspartate 1162 serves as the catalytic Proton acceptor. 4 EF-hand domains span residues 1338–1373, 1376–1406, 1407–1442, and 1468–1482; these read NHVK…AGVK, DINR…RWKN, IDST…NGVN, and KISF…LSTF. Ca(2+) contacts are provided by aspartate 1351, asparagine 1353, asparagine 1355, serine 1357, and glutamate 1362. The Ca(2+) site is built by aspartate 1420, aspartate 1422, aspartate 1424, tyrosine 1426, and aspartate 1431.

Belongs to the protein kinase superfamily. Ser/Thr protein kinase family. CDPK subfamily. It depends on Mg(2+) as a cofactor.

It catalyses the reaction L-seryl-[protein] + ATP = O-phospho-L-seryl-[protein] + ADP + H(+). It carries out the reaction L-threonyl-[protein] + ATP = O-phospho-L-threonyl-[protein] + ADP + H(+). Its activity is regulated as follows. Activated by calcium. Calcium-dependent protein kinase which acts as a sensor and effector of intracellular Ca(2+) levels. In sporozoites, probably involved in the secretion of the cysteine protease that cleaves circumsporozoite protein CSP, thereby exposing CSP TSR domain, which binds with high affinity to highly sulfated heparan sulfate proteoglycans (HSPGs), resulting in productive invasion of the host hepatocytes. The sequence is that of Calcium-dependent protein kinase 6 from Plasmodium berghei (strain Anka).